We begin with the raw amino-acid sequence, 251 residues long: Derlin-1 (251 aa).

At Ser2 the chain carries N-acetylserine. The Cytoplasmic portion of the chain corresponds to 2-15; the sequence is SDIGDWFRSIPAIT. A helical transmembrane segment spans residues 16 to 31; the sequence is RYWFAATVAVPLVGKL. Topologically, residues 32 to 69 are lumenal; that stretch reads GLISPAYLFLWPEAFLYRFQIWRPITATFYFPVGPGTG. A helical membrane pass occupies residues 70–89; the sequence is FLYLVNLYFLYQYSTRLETG. The Cytoplasmic portion of the chain corresponds to 90–94; that stretch reads AFDGR. A helical membrane pass occupies residues 95–115; sequence PADYLFMLLFNWICIVITGLA. Topologically, residues 116-122 are lumenal; that stretch reads MDMQLLM. A helical membrane pass occupies residues 123–137; sequence IPLIMSVLYVWAQLN. At 138–154 the chain is on the cytoplasmic side; sequence RDMIVSFWFGTRFKACY. The helical transmembrane segment at 155 to 166 threads the bilayer; it reads LPWVILGFNYII. Topologically, residues 167 to 170 are lumenal; the sequence is GGSV. Residues 171 to 189 traverse the membrane as a helical segment; that stretch reads INELIGNLVGHLYFFLMFR. Residues 190-251 lie on the Cytoplasmic side of the membrane; that stretch reads YPMDLGGRNF…WGQGFRLGDQ (62 aa). Position 201 is a phosphoserine (Ser201). Thr202 is subject to Phosphothreonine. Position 226 is a phosphoserine (Ser226). A disordered region spans residues 229–251; that stretch reads RAADQNGGGGRHNWGQGFRLGDQ. The SHP-box signature appears at 241–248; the sequence is NWGQGFRL.

It belongs to the derlin family. As to quaternary structure, homotetramer. The four subunits of the tetramer are arranged in a twofold symmetry. Forms heterooligomers with DERL2 and DERL3; binding to DERL3 is poorer than that between DERL2 and DERL3. Interacts (via SHP-box motif) with VCP. Interacts with AMFR, SELENOS, SEL1L, SELENOK and SYVN1, as well as with SEL1L-SYVN1 and VCP-SELENOS protein complexes; this interaction is weaker than that observed between DERL2 and these complexes. Interacts with NGLY1 and YOD1. Does not bind to EDEM1. Interacts with DNAJB9. Interacts with RNF103. Interacts with HM13. Interacts with XBP1 isoform 1 (via luminal/ectodomain domain); the interaction obviates the need for ectodomain shedding prior HM13/SPP-mediated XBP1 isoform 1 cleavage. Interacts with the signal recognition particle/SRP and the SRP receptor; in the process of endoplasmic reticulum stress-induced pre-emptive quality control. May interact with UBXN6. Interacts with ZFAND2B; probably through VCP. Interacts with CCDC47. Interacts with C18orf32. May interact with TRAM1. Forms a complex with SVIP and VCP/p97. In terms of assembly, (Microbial infection) Interacts with the cytomegalovirus US11 protein. In terms of tissue distribution, ubiquitous.

Its subcellular location is the endoplasmic reticulum membrane. In terms of biological role, functional component of endoplasmic reticulum-associated degradation (ERAD) for misfolded lumenal proteins. Forms homotetramers which encircle a large channel traversing the endoplasmic reticulum (ER) membrane. This allows the retrotranslocation of misfolded proteins from the ER into the cytosol where they are ubiquitinated and degraded by the proteasome. The channel has a lateral gate within the membrane which provides direct access to membrane proteins with no need to reenter the ER lumen first. May mediate the interaction between VCP and the misfolded protein. Also involved in endoplasmic reticulum stress-induced pre-emptive quality control, a mechanism that selectively attenuates the translocation of newly synthesized proteins into the endoplasmic reticulum and reroutes them to the cytosol for proteasomal degradation. By controlling the steady-state expression of the IGF1R receptor, indirectly regulates the insulin-like growth factor receptor signaling pathway. (Microbial infection) In case of infection by cytomegaloviruses, it plays a central role in the export from the ER and subsequent degradation of MHC class I heavy chains via its interaction with US11 viral protein, which recognizes and associates with MHC class I heavy chains. Also participates in the degradation process of misfolded cytomegalovirus US2 protein. The polypeptide is Derlin-1 (Homo sapiens (Human)).